Consider the following 503-residue polypeptide: Maturase K (503 aa).

This sequence belongs to the intron maturase 2 family. MatK subfamily.

It is found in the plastid. It localises to the chloroplast. In terms of biological role, usually encoded in the trnK tRNA gene intron. Probably assists in splicing its own and other chloroplast group II introns. This is Maturase K from Rubus ursinus (California blackberry).